Reading from the N-terminus, the 451-residue chain is FAD-dependent monooxygenase adrH (451 aa).

FAD contacts are provided by Glu39, Gly53, and Arg112. The active site involves Tyr196. The FAD site is built by Asp288 and Ala301. A glycan (N-linked (GlcNAc...) asparagine) is linked at Asn385. A helical transmembrane segment spans residues 426–446 (TLLWVSSLALFLFFPWLGSYL).

The protein belongs to the paxM FAD-dependent monooxygenase family. FAD serves as cofactor.

Its subcellular location is the membrane. It functions in the pathway secondary metabolite biosynthesis; terpenoid biosynthesis. Functionally, FAD-dependent monooxygenase; part of the gene cluster that mediates the biosynthesis of andrastins, meroterpenoid compounds that exhibit inhibitory activity against ras farnesyltransferase, suggesting that they could be promising leads for antitumor agents. The first step of the pathway is the synthesis of 3,5-dimethylorsellinic acid (DMOA) by the polyketide synthase adrD via condensation of one acetyl-CoA starter unit with 3 malonyl-CoA units and 2 methylations. DMAO is then converted to farnesyl-DMAO by the prenyltransferase adrG. The methyltransferase adrK catalyzes the methylation of the carboxyl group of farnesyl-DMAO to farnesyl-DMAO methyl ester which is further converted to epoxyfarnesyl-DMAO methyl ester by the FAD-dependent monooxygenase adrH. The terpene cyclase adrI then catalyzes the carbon skeletal rearrangement to generate the andrastin E, the first compound in the pathway having the andrastin scaffold, with the tetracyclic ring system. The post-cyclization tailoring enzymes adrF, adrE, adrJ, and adrA, are involved in the conversion of andrastin E into andrastin A. The short chain dehydrogenase adrF is responsible for the oxidation of the C-3 a hydroxyl group of andrastin E to yield the corresponding ketone, andrastin D. The ketoreductase adrE stereoselectively reduces the carbonyl moiety to reverse the stereochemistry of the C-3 position to yield andrastin F. The acetyltransferase adrJ is the acetyltransferase that attaches the acetyl group to the C-3 hydroxyl group of andrastin F to yield andrastin C. Finally, the cytochrome P450 monooxygenase adrA catalyzes two sequential oxidation reactions of the C-23 methyl group, to generate the corresponding alcohol andrastin B, and aldehyde andrastin A. The polypeptide is FAD-dependent monooxygenase adrH (Penicillium rubens (strain ATCC 28089 / DSM 1075 / NRRL 1951 / Wisconsin 54-1255) (Penicillium chrysogenum)).